We begin with the raw amino-acid sequence, 614 residues long: WD repeat-containing protein 26 (614 aa).

Low complexity-rich tracts occupy residues 1 to 19 and 34 to 44; these read MQAN…AGSG and SNGVLSSNNGL. A disordered region spans residues 1-65; the sequence is MQANGAAAAA…PGGRKKKRLS (65 aa). The LisH domain maps to 67 to 99; sequence ADEDVIRLIGQHLHGLGLNQTVDLLMQESGCRL. The 85-residue stretch at 100–184 folds into the CTLH domain; it reads EHPSATKFRN…EYLEDGKVLE (85 aa). WD repeat units follow at residues 306 to 345, 352 to 391, 397 to 437, 477 to 516, 519 to 561, and 564 to 604; these read EHCN…HQLK, GHAY…GELR, SHED…DSWE, QEDH…LVRK, GVTQ…PIAE, and GHTR…DNQE.

In terms of assembly, forms homooligomers. Identified in the CTLH complex that contains at least MAEA, RMND5A (or alternatively its paralog RMND5B), GID8, WDR26, and RANBP9 and/or RANBP10. Interacts with DDB1-CUL4A/B E3 ligase complexes.

Its subcellular location is the cytoplasm. It localises to the nucleus. The protein resides in the mitochondrion. Functionally, G-beta-like protein involved in cell signal transduction. Acts as a negative regulator in MAPK signaling pathway. Functions as a scaffolding protein to promote G beta:gamma-mediated PLCB2 plasma membrane translocation and subsequent activation in leukocytes. Core component of the CTLH E3 ubiquitin-protein ligase complex that mediates ubiquitination and subsequent proteasomal degradation of target proteins. Acts as a negative regulator of the canonical Wnt signaling pathway through preventing ubiquitination of beta-catenin CTNNB1 by the beta-catenin destruction complex, thus negatively regulating CTNNB1 degradation. Serves as a scaffold to coordinate PI3K/AKT pathway-driven cell growth and migration. Protects cells from oxidative stress-induced apoptosis via the down-regulation of AP-1 transcriptional activity as well as by inhibiting cytochrome c release from mitochondria. Also protects cells by promoting hypoxia-mediated autophagy and mitophagy. In Xenopus tropicalis (Western clawed frog), this protein is WD repeat-containing protein 26 (wdr26).